A 185-amino-acid polypeptide reads, in one-letter code: Photosystem I assembly protein Ycf4 (185 aa).

The next 2 helical transmembrane spans lie at 21-43 (NFFW…ASSY) and 63-85 (GVVM…CTIL).

This sequence belongs to the Ycf4 family.

The protein resides in the plastid. It is found in the chloroplast thylakoid membrane. Functionally, seems to be required for the assembly of the photosystem I complex. The protein is Photosystem I assembly protein Ycf4 of Saccharum hybrid (Sugarcane).